The chain runs to 114 residues: Anti-adapter protein IraM (114 aa).

It belongs to the IraM/RssC family.

The protein localises to the cytoplasm. Its function is as follows. Involved in the stabilization of the sigma stress factor RpoS. The sequence is that of Anti-adapter protein IraM from Citrobacter koseri (strain ATCC BAA-895 / CDC 4225-83 / SGSC4696).